A 1426-amino-acid chain; its full sequence is Homeobox protein cut-like 2 (1426 aa).

The interval Pro-77 to Gly-104 is disordered. A Phosphoserine modification is found at Ser-81. A coiled-coil region spans residues Ile-131–Ala-311. Disordered regions lie at residues Ala-351–Leu-419, Lys-460–Glu-488, Glu-599–Glu-628, Glu-653–Gln-676, Tyr-743–Asp-769, and Leu-904–Gln-977. The segment covering Pro-374 to Ala-395 has biased composition (pro residues). Low complexity-rich tracts occupy residues Pro-397–Pro-408 and Lys-460–Pro-470. Residues Asp-482–Arg-569 constitute a DNA-binding region (CUT 1). A coiled-coil region spans residues Asp-587–Gly-655. Residues Ser-608–Glu-628 are compositionally biased toward polar residues. 3 stretches are compositionally biased toward low complexity: residues Tyr-743–Ser-757, Gln-910–Ser-928, and Ser-965–Ser-976. Positions Gln-828–Gln-915 form a DNA-binding region, CUT 2. The CUT 3 DNA-binding region spans Gln-983–Leu-1070. Residues Ala-1113 to Met-1172 constitute a DNA-binding region (homeobox). The tract at residues Thr-1177–Asn-1392 is disordered. 2 stretches are compositionally biased toward basic and acidic residues: residues Ala-1233–Glu-1245 and Asp-1260–His-1274. Positions Leu-1318 to Glu-1332 are enriched in low complexity. A compositionally biased stretch (polar residues) spans Pro-1338–Val-1350. Positions Ser-1351–Leu-1364 are enriched in low complexity.

Belongs to the CUT homeobox family. As to expression, restricted to neural tissues. Expressed exclusively in the central and peripheral nervous systems.

The protein localises to the nucleus. Transcription factor involved in the control of neuronal proliferation and differentiation in the brain. Regulates dendrite development and branching, dendritic spine formation, and synaptogenesis in cortical layers II-III. Binds to DNA in a sequence-specific manner. The protein is Homeobox protein cut-like 2 (Cux2) of Mus musculus (Mouse).